Consider the following 522-residue polypeptide: Cell polarity protein mod5 (522 aa).

Disordered regions lie at residues 1-83, 119-158, 170-192, 251-285, and 300-516; these read MSAL…PDGD, KRSA…FNSN, RRIL…TKSA, PLQP…SPVP, and YSPS…KLEK. 3 stretches are compositionally biased toward polar residues: residues 27–46, 66–76, and 131–146; these read PNTT…SAPS, LPSSKQDTGSS, and NGST…SPSE. The residue at position 43 (serine 43) is a Phosphoserine. The segment covering 258 to 285 has biased composition (low complexity); that stretch reads PANETPASSSSSAKARPVSVPDMSSPVP. Serine 303 is subject to Phosphoserine. The segment covering 308–318 has biased composition (basic and acidic residues); that stretch reads KVAETDSESRK. Over residues 335 to 349 the composition is skewed to polar residues; the sequence is GAQTQSTPNRISRSD. Position 350 is a phosphoserine (serine 350). 2 stretches are compositionally biased toward polar residues: residues 363–396 and 404–431; these read NAST…TSTN and DIPQ…TPQV. Over residues 439-452 the composition is skewed to low complexity; sequence SRSSPLPSASVPAL. 2 stretches are compositionally biased toward basic and acidic residues: residues 472–482 and 495–516; these read HESEMPPHVTR and PKEK…KLEK.

Interacts with tea1 and tea3.

The protein resides in the cell membrane. With tea1, acts in a positive-feedback loop in the microtubule-mediated regulation of cell polarity. Involved in the anchoring of tea1 at the cortex as well as the correct localization of tea3. This Schizosaccharomyces pombe (strain 972 / ATCC 24843) (Fission yeast) protein is Cell polarity protein mod5 (mod5).